The sequence spans 475 residues: Glycogen synthase (475 aa).

Residue lysine 15 participates in ADP-alpha-D-glucose binding.

It belongs to the glycosyltransferase 1 family. Bacterial/plant glycogen synthase subfamily.

The enzyme catalyses [(1-&gt;4)-alpha-D-glucosyl](n) + ADP-alpha-D-glucose = [(1-&gt;4)-alpha-D-glucosyl](n+1) + ADP + H(+). It functions in the pathway glycan biosynthesis; glycogen biosynthesis. In terms of biological role, synthesizes alpha-1,4-glucan chains using ADP-glucose. The polypeptide is Glycogen synthase (Chlamydia abortus (strain DSM 27085 / S26/3) (Chlamydophila abortus)).